Consider the following 378-residue polypeptide: Putative zinc finger protein C09F5.3 (378 aa).

Over residues 1 to 14 the composition is skewed to basic residues; it reads MRKTEKMKRPHNSS. Disordered stretches follow at residues 1-36 and 61-80; these read MRKT…SKSI and TLSE…NSAP. 2 stretches are compositionally biased toward basic and acidic residues: residues 16 to 26 and 62 to 71; these read VKQEERADDSH and LSEHVPEKKP. The segment at 42–65 adopts a C2H2-type 1 zinc-finger fold; sequence LKCELCSTVCSSISQLQSHTLSEH. The C2H2-type 2; degenerate zinc-finger motif lies at 85–107; it reads VACQQCEDTFEDFAQFAIHMKSH. The C2H2-type 3; degenerate zinc finger occupies 204 to 226; it reads YGCALCATSYPSQLHLITHVQMS. Positions 231–250 are disordered; the sequence is TFYPPSLPIPTPPSPKSTPK. Positions 235-246 are enriched in pro residues; sequence PSLPIPTPPSPK. 4 C2H2-type zinc fingers span residues 254–277, 284–306, 312–334, and 355–377; these read LQCS…LRKH, DKCA…CLRH, HHCP…CAYH, and FVCP…TKIH.

The protein localises to the nucleus. The polypeptide is Putative zinc finger protein C09F5.3 (Caenorhabditis elegans).